The sequence spans 259 residues: MQRLRARDLRAVDLYRTVKSNLDTKFSLPGMPPGREHRQVPPPWLQAMQKIPPSEILTRPIPIQHQKPNPKARKPKNIFRPQKIVYEEDELRKTFYRDHPWELARPRVILEIDGMDSHYCDWSQGLEQPSIPLSGESVVQRQLWLMHNEGMTKEKAYDLVRREFYALRQEEEVERRIAQEEARMVGAYFGKNRLQIGNELEDHEYERWKDWAATEMAKAEAERENAMPTFGGKAKDAEASIDDLMLEGSMDAILEEKKA.

It belongs to the mitochondrion-specific ribosomal protein mS23 family. Component of the mitochondrial small ribosomal subunit.

It localises to the mitochondrion. This chain is Small ribosomal subunit protein mS23 (RSM25), found in Pyricularia oryzae (strain 70-15 / ATCC MYA-4617 / FGSC 8958) (Rice blast fungus).